The primary structure comprises 348 residues: Anthranilate phosphoribosyltransferase (348 aa).

5-phospho-alpha-D-ribose 1-diphosphate contacts are provided by residues G81, 84 to 85 (GD), T89, 91 to 94 (NIST), 109 to 117 (KHGNRSSSG), and S121. G81 provides a ligand contact to anthranilate. S93 is a binding site for Mg(2+). Anthranilate is bound at residue N112. R167 serves as a coordination point for anthranilate. D226 and E227 together coordinate Mg(2+).

It belongs to the anthranilate phosphoribosyltransferase family. Homodimer. The cofactor is Mg(2+).

It carries out the reaction N-(5-phospho-beta-D-ribosyl)anthranilate + diphosphate = 5-phospho-alpha-D-ribose 1-diphosphate + anthranilate. It functions in the pathway amino-acid biosynthesis; L-tryptophan biosynthesis; L-tryptophan from chorismate: step 2/5. Its function is as follows. Catalyzes the transfer of the phosphoribosyl group of 5-phosphorylribose-1-pyrophosphate (PRPP) to anthranilate to yield N-(5'-phosphoribosyl)-anthranilate (PRA). The sequence is that of Anthranilate phosphoribosyltransferase from Nitrosopumilus maritimus (strain SCM1).